The sequence spans 59 residues: UPF0434 protein VV1_2087 (59 aa).

It belongs to the UPF0434 family.

The chain is UPF0434 protein VV1_2087 from Vibrio vulnificus (strain CMCP6).